A 305-amino-acid chain; its full sequence is Protoheme IX farnesyltransferase (305 aa).

9 helical membrane passes run V29–V49, W51–I71, T101–N121, L123–L143, I151–G171, A177–L197, L221–Y241, S244–W264, and I283–P303.

The protein belongs to the UbiA prenyltransferase family. Protoheme IX farnesyltransferase subfamily.

Its subcellular location is the cell inner membrane. It catalyses the reaction heme b + (2E,6E)-farnesyl diphosphate + H2O = Fe(II)-heme o + diphosphate. The protein operates within porphyrin-containing compound metabolism; heme O biosynthesis; heme O from protoheme: step 1/1. In terms of biological role, converts heme B (protoheme IX) to heme O by substitution of the vinyl group on carbon 2 of heme B porphyrin ring with a hydroxyethyl farnesyl side group. The chain is Protoheme IX farnesyltransferase from Cupriavidus metallidurans (strain ATCC 43123 / DSM 2839 / NBRC 102507 / CH34) (Ralstonia metallidurans).